A 345-amino-acid polypeptide reads, in one-letter code: IGF-like family receptor 1 (345 aa).

The first 20 residues, Met1–Ala20, serve as a signal peptide directing secretion. At Ala21–Ser163 the chain is on the extracellular side. The N-linked (GlcNAc...) asparagine glycan is linked to Asn87. Residues Val106–Thr149 are disordered. Residues Arg111–Val121 are compositionally biased toward basic residues. The segment covering Ala136–Thr149 has biased composition (polar residues). Residues Val164–Leu184 traverse the membrane as a helical segment. At Leu185–Gly345 the chain is on the cytoplasmic side.

As to expression, ubiquitously expressed with higher expression in lymph node. Highly expressed in T-cells and monocytes.

It is found in the cell membrane. Its function is as follows. Probable cell membrane receptor for the IGF-like family protein IGFL. The sequence is that of IGF-like family receptor 1 (Igflr1) from Mus musculus (Mouse).